A 224-amino-acid polypeptide reads, in one-letter code: Small ribosomal subunit protein uS3 (224 aa).

The KH type-2 domain occupies 39 to 107; the sequence is IREFLKKKPS…DVWVEIAEVK (69 aa).

It belongs to the universal ribosomal protein uS3 family. Part of the 30S ribosomal subunit. Forms a tight complex with proteins S10 and S14.

Binds the lower part of the 30S subunit head. Binds mRNA in the 70S ribosome, positioning it for translation. The chain is Small ribosomal subunit protein uS3 from Chlamydia trachomatis serovar D (strain ATCC VR-885 / DSM 19411 / UW-3/Cx).